A 356-amino-acid polypeptide reads, in one-letter code: 4-hydroxy-3-methylbut-2-en-1-yl diphosphate synthase (flavodoxin) (356 aa).

Residues cysteine 264, cysteine 267, cysteine 299, and glutamate 306 each contribute to the [4Fe-4S] cluster site.

The protein belongs to the IspG family. Requires [4Fe-4S] cluster as cofactor.

It catalyses the reaction (2E)-4-hydroxy-3-methylbut-2-enyl diphosphate + oxidized [flavodoxin] + H2O + 2 H(+) = 2-C-methyl-D-erythritol 2,4-cyclic diphosphate + reduced [flavodoxin]. It participates in isoprenoid biosynthesis; isopentenyl diphosphate biosynthesis via DXP pathway; isopentenyl diphosphate from 1-deoxy-D-xylulose 5-phosphate: step 5/6. Its function is as follows. Converts 2C-methyl-D-erythritol 2,4-cyclodiphosphate (ME-2,4cPP) into 1-hydroxy-2-methyl-2-(E)-butenyl 4-diphosphate. This Natranaerobius thermophilus (strain ATCC BAA-1301 / DSM 18059 / JW/NM-WN-LF) protein is 4-hydroxy-3-methylbut-2-en-1-yl diphosphate synthase (flavodoxin).